Here is a 737-residue protein sequence, read N- to C-terminus: Delta and Notch-like epidermal growth factor-related receptor (737 aa).

An N-terminal signal peptide occupies residues 1-34; sequence MQPRRAQAPGAQLLPALALLLLLLGAGPRGSSLA. Over 35–640 the chain is Extracellular; that stretch reads NPVPAAPLSA…LTNMPRHSLY (606 aa). EGF-like domains follow at residues 44-92 and 94-133; these read APGP…ANCQ and VADP…PNCE. The segment at 44-133 is interaction with NOTCH1; sequence APGPCAAQPC…NEGYEGPNCE (90 aa). 6 disulfide bridges follow: C48-C59, C53-C80, C82-C91, C98-C108, C103-C121, and C123-C132. N-linked (GlcNAc...) asparagine glycosylation is present at N223. EGF-like domains follow at residues 309-348, 349-390, 392-428, 430-466, and 468-503; these read PGES…TFCE, EYDA…ELCQ, KIDY…SACE, KVDP…PTCA, and LIDF…LYCE. 23 cysteine pairs are disulfide-bonded: C319–C336, C338–C347, C353–C364, C358–C378, C380–C389, C396–C407, C401–C416, C418–C427, C434–C445, C439–C454, C456–C465, C472–C482, C477–C491, C493–C502, C509–C520, C514–C529, C531–C540, C547–C558, C552–C567, C569–C578, C585–C596, C590–C605, and C607–C616. The region spanning 505–541 is the EGF-like 8; calcium-binding domain; it reads EYNECLSAPCLNAATCRDLVNGYECVCLAEYKGTHCE. The 37-residue stretch at 543–579 folds into the EGF-like 9 domain; that stretch reads YKDPCANVSCLNGATCDSDGLNGTCICAPGFTGEECD. One can recognise a Follistatin-like domain in the interval 546–568; sequence PCANVSCLNGATCDSDGLNGTCI. N564 is a glycosylation site (N-linked (GlcNAc...) asparagine). In terms of domain architecture, EGF-like 10; calcium-binding spans 581-617; sequence DINECDSNPCHHGGSCLDQPNGYNCHCPHGWVGANCE. A helical membrane pass occupies residues 641–661; the sequence is IIIGALCVAFILMLIILIVGI. The Cytoplasmic segment spans residues 662–737; that stretch reads CRISRIEYQG…LVTLIKTKDL (76 aa). Residues 677-680 form an interaction with AP1G1 and somatodendritic targeting region; sequence YEEF. S685 bears the Phosphoserine mark. Phosphotyrosine occurs at positions 711 and 721. S722 carries the post-translational modification Phosphoserine.

In terms of assembly, interacts with AP1G1. Interacts with NOTCH1. In terms of tissue distribution, expressed in brain, spinal cord and adrenal gland.

The protein localises to the cell membrane. Functionally, activator of the NOTCH1 pathway. May mediate neuron-glia interaction during astrocytogenesis. This chain is Delta and Notch-like epidermal growth factor-related receptor (DNER), found in Homo sapiens (Human).